The chain runs to 165 residues: Cyclic pyranopterin monophosphate synthase (165 aa).

Residues 76 to 78 (LCH) and 114 to 115 (ME) each bind substrate. Asp129 is a catalytic residue.

It belongs to the MoaC family. In terms of assembly, homohexamer; trimer of dimers.

The enzyme catalyses (8S)-3',8-cyclo-7,8-dihydroguanosine 5'-triphosphate = cyclic pyranopterin phosphate + diphosphate. It functions in the pathway cofactor biosynthesis; molybdopterin biosynthesis. Catalyzes the conversion of (8S)-3',8-cyclo-7,8-dihydroguanosine 5'-triphosphate to cyclic pyranopterin monophosphate (cPMP). This Brucella melitensis biotype 2 (strain ATCC 23457) protein is Cyclic pyranopterin monophosphate synthase.